The sequence spans 2647 residues: Filamin-A (2647 aa).

Low complexity predominate over residues 1 to 15 (MSSSHSRAGQSAAGA). Residues 1-39 (MSSSHSRAGQSAAGAAPGGGVDTRDAEMPATEKDLAEDA) form a disordered region. Serine 2 bears the N-acetylserine mark. Residues 2-274 (SSSHSRAGQS…PKAKLKPGAP (273 aa)) are actin-binding. Serine 11 is modified (phosphoserine). Basic and acidic residues predominate over residues 22 to 39 (DTRDAEMPATEKDLAEDA). Glycyl lysine isopeptide (Lys-Gly) (interchain with G-Cter in ubiquitin) cross-links involve residues lysine 42, lysine 43, and lysine 135. 2 consecutive Calponin-homology (CH) domains span residues 43–149 (KIQQ…LHYS) and 166–269 (QTPK…KAKL). The tract at residues 271 to 294 (PGAPLRPKLNPKKARAYGPGIEPT) is disordered. Filamin repeat units lie at residues 276-374 (RPKL…EVYV), 376-474 (KSQG…TVTV), 475-570 (GQAC…EVKV), 571-663 (GTEC…MADI), 667-763 (PQDF…RVNV), 764-866 (GAGS…RVKV), 867-965 (EPSH…SVAV), 966-1061 (SPSL…PLEA), 1062-1154 (VAPT…KAHV), 1155-1249 (VPCF…KLQV), 1250-1349 (EPAV…QVPV), 1350-1442 (TEGC…KVPV), 1443-1539 (HDVT…KVKV), 1540-1636 (LPTH…RVRA), and 1649-1740 (VSIG…QVTA). Lysine 299 is covalently cross-linked (Glycyl lysine isopeptide (Lys-Gly) (interchain with G-Cter in SUMO1); alternate). A Glycyl lysine isopeptide (Lys-Gly) (interchain with G-Cter in SUMO2); alternate cross-link involves residue lysine 299. Residues lysine 376 and lysine 508 each carry the N6-acetyllysine modification. Residues lysine 700, lysine 781, lysine 837, lysine 865, and lysine 906 each carry the N6-acetyllysine modification. Serine 968 and serine 1055 each carry phosphoserine. An N6-acetyllysine; alternate modification is found at lysine 1071. N6-succinyllysine; alternate is present on lysine 1071. Phosphoserine occurs at positions 1081 and 1084. Threonine 1089 is modified (phosphothreonine). 2 positions are modified to phosphoserine: serine 1301 and serine 1338. The disordered stretch occupies residues 1361–1382 (HGPGIQSGTTNKPNKFTVETRG). An N6-acetyllysine modification is found at lysine 1372. Phosphoserine is present on residues serine 1459 and serine 1533. The segment at 1490-1607 (PKGLVEPVDV…DNHDGTYTVA (118 aa)) is interaction with furin. Lysine 1538 is subject to N6-acetyllysine. Phosphoserine occurs at positions 1630 and 1734. The tract at residues 1741–1778 (LAGDQPSVQPPLRSQQLAPQYTYAQGGQQTWAPERPLV) is hinge 1. Filamin repeat units lie at residues 1779 to 1860 (GVNG…QFYV), 1861 to 1950 (DYVN…PFTA), 1951 to 2039 (RVTG…PVVI), 2042 to 2131 (SEIG…SPFS), 2132 to 2230 (VKVT…QFTV), 2233 to 2325 (LGEG…VVPV), 2327 to 2420 (SPSG…KIRV), and 2424 to 2516 (GHGG…KAKV). Serine 1835 bears the Phosphoserine mark. A phosphoserine mark is found at serine 1967, serine 2053, serine 2128, serine 2152, serine 2158, serine 2163, serine 2180, serine 2284, serine 2327, and serine 2329. The residue at position 2336 (threonine 2336) is a Phosphothreonine. Phosphoserine occurs at positions 2338, 2370, 2414, 2510, 2523, and 2526. The tract at residues 2517-2551 (TGPRLVSNHSLHETSSVFVDSLTKATCAPQHGAPG) is hinge 2. Residues 2517–2647 (TGPRLVSNHS…PGSPYRVVVP (131 aa)) form a self-association site, tail region. The Filamin 24 repeat unit spans residues 2552-2646 (PGPADASKVV…IPGSPYRVVV (95 aa)). Position 2569 is an N6-acetyllysine; alternate (lysine 2569). The residue at position 2569 (lysine 2569) is an N6-succinyllysine; alternate. Position 2575 is an N6-acetyllysine (lysine 2575). Residue threonine 2599 is modified to Phosphothreonine. N6-acetyllysine occurs at positions 2607 and 2621.

This sequence belongs to the filamin family. As to quaternary structure, homodimer. Interacts with PDLIM2. Interacts with RFLNA and RFLNB. Interacts with FCGR1A, FLNB, FURIN, HSPB7, INPPL1, KCND2, MYOT, MYOZ1, ARHGAP24, PSEN1, PSEN2 and ECSCR. Also interacts with various other binding partners in addition to filamentous actin. Interacts (via N-terminus) with MIS18BP1 (via N-terminus). Interacts (via N-terminus) with TAF1B. Interacts with TMEM67 (via C-terminus) and MKS1. Interacts (via actin-binding domain) with MICALL2 (via CH domain). Interacts (via filamin repeat 5) with SYK; docks SYK to the plasma membrane. Interacts (via filamin repeats 19 and 21) with DRD3; increased PKA-mediated phosphorylation at Ser-2152. Interacts (via filamin repeat 21) with MAS1, AGTR1 and ADRA1D; increases PKA-mediated phosphorylation of FLNA at Ser-2152. Interacts (via filamin repeats 4, 9, 12, 17, 19, 21, and 23) with GP1BA (high affinity), ITGB7, ITGB2 and FBLIM1. Interacts with CEACAM1 (via cytoplasmic domain); inhibits cell migration and cell scattering by interfering with the interaction between FLNA and RALA. Interacts with FOXC1. Interacts (via calponin-homology (CH) domain 1 and filamin repeat 24) with CRMP1; the interaction alters FLNA ternary structure and thus promotes FLNA dissociation from F-actin. Interacts with DPYSL3/CRMP3 and DPYSL4/CRMP4. In terms of assembly, interacts with integrin ITGB1 isoform 1/beta-1A and isoform 5/beta-1D. Interacts with LUZP1; the interaction is not necessary for colocalization of LUZP1 with F-actin. Post-translationally, phosphorylation at Ser-2152 is negatively regulated by the autoinhibited conformation of filamin repeats 19-21. Ligand binding induces a conformational switch triggering phosphorylation at Ser-2152 by PKA. Phosphorylation extent changes in response to cell activation. In terms of processing, polyubiquitination in the CH1 domain by a SCF-like complex containing ASB2 leads to proteasomal degradation. Prior dissociation from actin may be required to expose the target lysines. Ubiquitinated in endothelial cells by RNF213 downstream of the non-canonical Wnt signaling pathway, leading to its degradation by the proteasome. As to expression, ubiquitous.

It is found in the cytoplasm. Its subcellular location is the cell cortex. The protein resides in the cytoskeleton. The protein localises to the perikaryon. It localises to the cell projection. It is found in the growth cone. Its subcellular location is the podosome. In terms of biological role, promotes orthogonal branching of actin filaments and links actin filaments to membrane glycoproteins. Anchors various transmembrane proteins to the actin cytoskeleton and serves as a scaffold for a wide range of cytoplasmic signaling proteins. Interaction with FLNB may allow neuroblast migration from the ventricular zone into the cortical plate. Tethers cell surface-localized furin, modulates its rate of internalization and directs its intracellular trafficking. Involved in ciliogenesis. Plays a role in cell-cell contacts and adherens junctions during the development of blood vessels, heart and brain organs. Plays a role in platelets morphology through interaction with SYK that regulates ITAM- and ITAM-like-containing receptor signaling, resulting in by platelet cytoskeleton organization maintenance. During the axon guidance process, required for growth cone collapse induced by SEMA3A-mediated stimulation of neurons. The sequence is that of Filamin-A (FLNA) from Homo sapiens (Human).